We begin with the raw amino-acid sequence, 767 residues long: E3 ubiquitin-protein ligase pub1 (767 aa).

In terms of domain architecture, C2 spans 1–111; sequence MSNSAQSRRI…AIGGDEMLTR (111 aa). Residues 138 to 158 show a composition bias toward polar residues; it reads LQVPSSAASGARTQRTSITND. 2 disordered regions span residues 138–216 and 252–306; these read LQVP…RRTD and SASS…RPYF. Threonine 156 carries the phosphothreonine modification. Residues 159-176 show a composition bias toward low complexity; sequence PQSSQSSSVSRNPASSRA. Serine 178 is modified (phosphoserine). Threonine 180 carries the post-translational modification Phosphothreonine. Positions 184–194 are enriched in low complexity; sequence APAASPASSEP. Residues 211–236 enclose the WW 1 domain; sequence WERRTDNLGRTYYVDHNTRSTTWIRP. Over residues 257 to 286 the composition is skewed to polar residues; sequence NVTEGVQPSSSNAARRTEASVLTSNATTAG. 2 consecutive WW domains span residues 294 to 319 and 351 to 376; these read WEQR…WVDP and WEMR…WDDP. Residues 463–767 form the HECT domain; that stretch reads FLLSHEMFNP…VEETIGFGQE (305 aa). Catalysis depends on cysteine 735, which acts as the Glycyl thioester intermediate.

Its subcellular location is the membrane. It localises to the cytoplasm. It carries out the reaction S-ubiquitinyl-[E2 ubiquitin-conjugating enzyme]-L-cysteine + [acceptor protein]-L-lysine = [E2 ubiquitin-conjugating enzyme]-L-cysteine + N(6)-ubiquitinyl-[acceptor protein]-L-lysine.. Its pathway is protein modification; protein ubiquitination. E3 ubiquitin-protein ligase which accepts ubiquitin from an E2 ubiquitin-conjugating enzyme in the form of a thioester and then directly transfers the ubiquitin to targeted substrates. Regulates ubiquitination of cdc25. The protein is E3 ubiquitin-protein ligase pub1 (pub1) of Schizosaccharomyces pombe (strain 972 / ATCC 24843) (Fission yeast).